A 297-amino-acid chain; its full sequence is Lymphocyte antigen 6 complex locus protein G6f (297 aa).

The first 16 residues, 1-16 (MAVLFLLLFLCGTPQA), serve as a signal peptide directing secretion. Positions 17–122 (ADNMQAIYVA…HNYQNWRVYD (106 aa)) constitute an Ig-like V-type domain. Over 17 to 235 (ADNMQAIYVA…APSTGWDMPW (219 aa)) the chain is Extracellular. Residues C35 and C106 are joined by a disulfide bond. N-linked (GlcNAc...) asparagine glycosylation occurs at N88. The chain crosses the membrane as a helical span at residues 236 to 256 (ILMLLLTMGQGVVILALSIVL). The Cytoplasmic segment spans residues 257-297 (WRQRVRGAPGRDASIPQFKPEIQVYENIHLARLGPPAHKPR). Y281 carries the post-translational modification Phosphotyrosine.

Homodimer; disulfide-linked. Interacts with GRB2 and GRB7 in a phosphorylation-dependent manner. N-glycosylated.

Its subcellular location is the cell membrane. May play a role in the downstream signal transduction pathways involving GRB2 and GRB7. The sequence is that of Lymphocyte antigen 6 complex locus protein G6f (LY6G6F) from Homo sapiens (Human).